The sequence spans 55 residues: Small ribosomal subunit protein uS14 (55 aa).

Cysteine 20, cysteine 23, cysteine 38, and cysteine 41 together coordinate Zn(2+).

The protein belongs to the universal ribosomal protein uS14 family. Zn(2+) serves as cofactor.

This Dictyostelium discoideum (Social amoeba) protein is Small ribosomal subunit protein uS14 (rps29).